Consider the following 190-residue polypeptide: UPF0301 protein RSc0675 (190 aa).

This sequence belongs to the UPF0301 (AlgH) family.

The protein is UPF0301 protein RSc0675 of Ralstonia nicotianae (strain ATCC BAA-1114 / GMI1000) (Ralstonia solanacearum).